A 736-amino-acid chain; its full sequence is RNA-binding protein RMD9-like, mitochondrial (736 aa).

3 disordered regions span residues 1–28 (MFRF…KTNS), 124–148 (PRRS…HPNT), and 566–618 (NRGI…GTPV). The transit peptide at 1–79 (MFRFAQPANV…HFKNQFSSRN (79 aa)) directs the protein to the mitochondrion. Low complexity predominate over residues 125-140 (RRSNMRNNGNNNMNNG). Over residues 566 to 578 (NRGISSSSPMSAV) the composition is skewed to polar residues. A compositionally biased stretch (low complexity) spans 579-596 (NSLAPSTTNTPSPSLSPI). The span at 602-613 (LSSARNTPNKIW) shows a compositional bias: polar residues.

This sequence belongs to the RMD9 family. In terms of assembly, monomer. In terms of processing, phosphorylated. Phosphorylation promotes binding to RNA.

The protein localises to the mitochondrion inner membrane. In terms of biological role, may be involved in the processing or stability of mitochondrial mRNAs. This Candida glabrata (strain ATCC 2001 / BCRC 20586 / JCM 3761 / NBRC 0622 / NRRL Y-65 / CBS 138) (Yeast) protein is RNA-binding protein RMD9-like, mitochondrial.